Here is a 188-residue protein sequence, read N- to C-terminus: Adenine phosphoribosyltransferase (188 aa).

This sequence belongs to the purine/pyrimidine phosphoribosyltransferase family. Homodimer.

The protein resides in the cytoplasm. It catalyses the reaction AMP + diphosphate = 5-phospho-alpha-D-ribose 1-diphosphate + adenine. The protein operates within purine metabolism; AMP biosynthesis via salvage pathway; AMP from adenine: step 1/1. Its function is as follows. Catalyzes a salvage reaction resulting in the formation of AMP, that is energically less costly than de novo synthesis. This is Adenine phosphoribosyltransferase from Salinispora tropica (strain ATCC BAA-916 / DSM 44818 / JCM 13857 / NBRC 105044 / CNB-440).